Here is a 118-residue protein sequence, read N- to C-terminus: Small ribosomal subunit protein eS10 (118 aa).

Residues 91-118 (RLKNAPAERPRPSRGGPRRGGYRGRARD) are disordered. Basic residues predominate over residues 106-118 (GPRRGGYRGRARD).

Belongs to the eukaryotic ribosomal protein eS10 family. Component of the small ribosomal subunit. Mature ribosomes consist of a small (40S) and a large (60S) subunit. The 40S subunit contains about 32 different proteins and 1 molecule of RNA (18S). The 60S subunit contains 45 different proteins and 3 molecules of RNA (25S, 5.8S and 5S).

The protein resides in the cytoplasm. Component of the ribosome, a large ribonucleoprotein complex responsible for the synthesis of proteins in the cell. The small ribosomal subunit (SSU) binds messenger RNAs (mRNAs) and translates the encoded message by selecting cognate aminoacyl-transfer RNA (tRNA) molecules. The large subunit (LSU) contains the ribosomal catalytic site termed the peptidyl transferase center (PTC), which catalyzes the formation of peptide bonds, thereby polymerizing the amino acids delivered by tRNAs into a polypeptide chain. The nascent polypeptides leave the ribosome through a tunnel in the LSU and interact with protein factors that function in enzymatic processing, targeting, and the membrane insertion of nascent chains at the exit of the ribosomal tunnel. The polypeptide is Small ribosomal subunit protein eS10 (RPS10) (Candida albicans (strain SC5314 / ATCC MYA-2876) (Yeast)).